The sequence spans 439 residues: Probable glycine dehydrogenase (decarboxylating) subunit 1 (439 aa).

It belongs to the GcvP family. N-terminal subunit subfamily. As to quaternary structure, the glycine cleavage system is composed of four proteins: P, T, L and H. In this organism, the P 'protein' is a heterodimer of two subunits.

It carries out the reaction N(6)-[(R)-lipoyl]-L-lysyl-[glycine-cleavage complex H protein] + glycine + H(+) = N(6)-[(R)-S(8)-aminomethyldihydrolipoyl]-L-lysyl-[glycine-cleavage complex H protein] + CO2. The glycine cleavage system catalyzes the degradation of glycine. The P protein binds the alpha-amino group of glycine through its pyridoxal phosphate cofactor; CO(2) is released and the remaining methylamine moiety is then transferred to the lipoamide cofactor of the H protein. The protein is Probable glycine dehydrogenase (decarboxylating) subunit 1 of Aquifex aeolicus (strain VF5).